The primary structure comprises 163 residues: NADH-quinone oxidoreductase subunit I (163 aa).

4Fe-4S ferredoxin-type domains follow at residues 54 to 84 and 94 to 123; these read LRRY…IDSA and TRYD…ETHI. Positions 64, 67, 70, 74, 103, 106, 109, and 113 each coordinate [4Fe-4S] cluster.

It belongs to the complex I 23 kDa subunit family. In terms of assembly, NDH-1 is composed of 14 different subunits. Subunits NuoA, H, J, K, L, M, N constitute the membrane sector of the complex. Requires [4Fe-4S] cluster as cofactor.

Its subcellular location is the cell inner membrane. It carries out the reaction a quinone + NADH + 5 H(+)(in) = a quinol + NAD(+) + 4 H(+)(out). Functionally, NDH-1 shuttles electrons from NADH, via FMN and iron-sulfur (Fe-S) centers, to quinones in the respiratory chain. The immediate electron acceptor for the enzyme in this species is believed to be ubiquinone. Couples the redox reaction to proton translocation (for every two electrons transferred, four hydrogen ions are translocated across the cytoplasmic membrane), and thus conserves the redox energy in a proton gradient. The polypeptide is NADH-quinone oxidoreductase subunit I (Xylella fastidiosa (strain 9a5c)).